The chain runs to 71 residues: Alpha-elapitoxin-Nn3a (71 aa).

5 cysteine pairs are disulfide-bonded: Cys-3–Cys-20, Cys-14–Cys-42, Cys-26–Cys-30, Cys-46–Cys-56, and Cys-57–Cys-62.

The protein belongs to the three-finger toxin family. Long-chain subfamily. Type II alpha-neurotoxin sub-subfamily. As to expression, expressed by the venom gland.

It localises to the secreted. Functionally, nicotinic acetylcholine receptor antagonist. Binds to muscle nicotinic acetylcholine receptor (nAChR) and inhibits acetylcholine from binding to the receptor, thereby impairing neuromuscular transmission. Produces peripheral paralysis by blocking neuromuscular transmission at the postsynaptic site. Induces concentration-dependent inhibition of indirect twitches and abolishes contractile responses of tissues to exogenous acetylcholine and carbachol, in the chick biventer cervicis nerve-muscle preparation at 100-300 nM (in vitro). Prior incubation of tissues with Indian polyvalent antivenom (1 ml/0.6 mg) prevents the neurotoxic effects at 100 nM (in vitro). Addition of Indian polyvalent antivenom (1 ml/0.6 mg) at the t90 time point partially restores the neurotoxic effects (in vitro). Displays a reversible antagonism of concentration-response curves to carbachol, with a pA2 of 8.17 (in vitro). The sequence is that of Alpha-elapitoxin-Nn3a from Naja naja (Indian cobra).